The sequence spans 65 residues: Weak toxin CM-13b (65 aa).

5 disulfides stabilise this stretch: Cys3–Cys24, Cys6–Cys11, Cys17–Cys42, Cys46–Cys57, and Cys58–Cys63.

Belongs to the three-finger toxin family. Ancestral subfamily. Orphan group II sub-subfamily. As to expression, expressed by the venom gland.

The protein localises to the secreted. Functionally, binds with low affinity to muscular (alpha-1-beta-1-delta-epsilon/CHRNA1-CHRNB1-CHRND-CHRNE) and very low affinity to neuronal (alpha-7/CHRNA7) nicotinic acetylcholine receptor (nAChR). This is Weak toxin CM-13b from Naja annulifera (Banded Egyptian cobra).